A 48-amino-acid polypeptide reads, in one-letter code: Entericidin B (48 aa).

Residues 1-21 (MVKKTIAAIFSVLVLSTVLTA) form the signal peptide. Residue Cys-22 is the site of N-palmitoyl cysteine attachment. The S-diacylglycerol cysteine moiety is linked to residue Cys-22.

This sequence belongs to the EcnA/EcnB lipoprotein family.

It localises to the cell membrane. In terms of biological role, plays a role in the bacteriolysis. Is activated under conditions of high osmolarity by the factor sigma S. Entericidin A functions as an antidote. This Escherichia coli O157:H7 protein is Entericidin B (ecnB).